Reading from the N-terminus, the 512-residue chain is Gasdermin-E (512 aa).

The interval 1–56 (MFAKATRNFLKEVDAGGDLISVSHLNDSDKLQLLSLVTKKKRYWCWQRPKYQILSA) is membrane targeting domain. S-(2-succinyl)cysteine is present on C45. A Glycyl lysine isopeptide (Lys-Gly) (interchain with G-Cter in ubiquitin) cross-link involves residue K120. C156, C168, and C180 each carry S-(2-succinyl)cysteine. K189 is covalently cross-linked (Glycyl lysine isopeptide (Lys-Gly) (interchain with G-Cter in ubiquitin)). 3 positions are modified to S-(2-succinyl)cysteine: C235, C411, and C420.

Belongs to the gasdermin family. As to quaternary structure, homooligomer; homooligomeric ring-shaped pore complex containing 27-28 subunits when inserted in the membrane. In terms of processing, cleavage at Asp-270 by CASP3 (mature and uncleaved precursor forms) or granzyme B (GZMB) relieves autoinhibition and is sufficient to initiate pyroptosis. Post-translationally, succination by the Krebs cycle intermediate fumarate, which leads to S-(2-succinyl)cysteine residues, inhibits processing by caspases, and ability to initiate pyroptosis. Succination modification is catalyzed by a non-enzymatic reaction caused by an accumulation of fumarate. Ubiquitinated on Lys-120 and Lys-189 via 'Lys-48'-linked polyubiquitin chains, leading to proteasomal degradation. Deubiquitinated by USP48, leading to increased stability. In terms of processing, palmitoylated. As to expression, expressed in spleen, kidney, large and small intestine, testicle, stomach and by CD4(+)CD(8+) T cells in thymus. Expressed by macrophages.

The protein localises to the cell membrane. It is found in the cytoplasm. Its subcellular location is the cytosol. The full-length protein before cleavage is inactive: intramolecular interactions between N- and C-terminal domains mediate autoinhibition in the absence of activation signal. The intrinsic pyroptosis-inducing activity is carried by the released N-terminal moiety (Gasdermin-E, N-terminal) following cleavage by CASP3 or granzyme B (GZMB). Activated by NLRP1 in the absence of GSDMD expression: NLRP1 cleaves and activates CASP8, promoting downstream activation of CASP3 and subsequent activation of GSDME. In terms of biological role, precursor of a pore-forming protein that converts non-inflammatory apoptosis to pyroptosis. This form constitutes the precursor of the pore-forming protein: upon cleavage, the released N-terminal moiety (Gasdermin-E, N-terminal) binds to membranes and forms pores, triggering pyroptosis. Its function is as follows. Pore-forming protein produced by cleavage by CASP3 or granzyme B (GZMB), which converts non-inflammatory apoptosis to pyroptosis or promotes granzyme-mediated pyroptosis, respectively. After cleavage, moves to the plasma membrane, homooligomerizes within the membrane and forms pores of 10-15 nanometers (nm) of inner diameter, allowing the release of mature interleukins (IL1B and IL16) and triggering pyroptosis. Binds to inner leaflet lipids, bisphosphorylated phosphatidylinositols, such as phosphatidylinositol (4,5)-bisphosphate. Cleavage by CASP3 switches CASP3-mediated apoptosis induced by TNF or danger signals, such as chemotherapy drugs, to pyroptosis. Mediates secondary necrosis downstream of the mitochondrial apoptotic pathway and CASP3 activation as well as in response to viral agents. Exhibits bactericidal activity. Cleavage by GZMB promotes tumor suppressor activity by triggering robust anti-tumor immunity. Suppresses tumors by mediating granzyme-mediated pyroptosis in target cells of natural killer (NK) cells: cleavage by granzyme B (GZMB), delivered to target cells from NK-cells, triggers pyroptosis of tumor cells and tumor suppression. May play a role in the p53/TP53-regulated cellular response to DNA damage. The polypeptide is Gasdermin-E (Mus musculus (Mouse)).